Reading from the N-terminus, the 25-residue chain is Toxin LyeTx 1 (25 aa).

The residue at position 25 (Leu25) is a Leucine amide.

As to expression, expressed by the venom gland.

The protein resides in the secreted. Has antimicrobial activity against Gram-positive bacterium S.aureus (MIC=3.79 uM), Gram-negative bacterium E.coli (MIC=7.81 uM) and yeasts C.krusei (MIC=26.3 uM) and C.neoformans (MIC=13.2 uM). Has hemolytic activity against rabbit erythrocytes. Forms pores in lipid bilayers in vitro; pore formation is reduced when cholesterol is present in the bilayers. The chain is Toxin LyeTx 1 from Lycosa erythrognatha (Wolf spider).